The primary structure comprises 403 residues: Para-nitrophenol 4-monooxygenase (403 aa).

FAD is bound by residues Gly-6–Ala-35 and Phe-279–Asp-289.

The protein belongs to the PheA/TfdB FAD monooxygenase family. Monomer. It depends on FAD as a cofactor.

The catalysed reaction is 4-nitrophenol + NADPH + O2 + H(+) = 1,4-benzoquinone + nitrite + NADP(+) + H2O. It functions in the pathway xenobiotic degradation; 4-nitrophenol degradation. In terms of biological role, involved in the degradation of para-nitrophenol (4-NP). Catalyzes oxidation of 4-nitrophenol (4-NP) at position 4 with concomitant removal of the nitro group as nitrite and production of para-benzoquinone. The polypeptide is Para-nitrophenol 4-monooxygenase (pnpA) (Pseudomonas sp. (strain WBC-3)).